We begin with the raw amino-acid sequence, 341 residues long: Biotin synthase (341 aa).

The Radical SAM core domain maps to 40 to 264; sequence NSVKLNYLVN…VAPRSELRIA (225 aa). [4Fe-4S] cluster contacts are provided by cysteine 55, cysteine 59, and cysteine 62. Residues cysteine 99, cysteine 132, cysteine 192, and arginine 262 each contribute to the [2Fe-2S] cluster site. The segment at 317–341 is disordered; it reads ASAPQGGVEPVLRKRGAGTELQPNA.

The protein belongs to the radical SAM superfamily. Biotin synthase family. As to quaternary structure, homodimer. It depends on [4Fe-4S] cluster as a cofactor. Requires [2Fe-2S] cluster as cofactor.

It catalyses the reaction (4R,5S)-dethiobiotin + (sulfur carrier)-SH + 2 reduced [2Fe-2S]-[ferredoxin] + 2 S-adenosyl-L-methionine = (sulfur carrier)-H + biotin + 2 5'-deoxyadenosine + 2 L-methionine + 2 oxidized [2Fe-2S]-[ferredoxin]. The protein operates within cofactor biosynthesis; biotin biosynthesis; biotin from 7,8-diaminononanoate: step 2/2. Catalyzes the conversion of dethiobiotin (DTB) to biotin by the insertion of a sulfur atom into dethiobiotin via a radical-based mechanism. This Renibacterium salmoninarum (strain ATCC 33209 / DSM 20767 / JCM 11484 / NBRC 15589 / NCIMB 2235) protein is Biotin synthase.